We begin with the raw amino-acid sequence, 446 residues long: Eukaryotic translation initiation factor 3 subunit E (446 aa).

Positions 256-425 (TDLFFSPAYI…GTVIMNHPPQ (170 aa)) constitute a PCI domain.

It belongs to the eIF-3 subunit E family. Component of the eukaryotic translation initiation factor 3 (eIF-3) complex.

It is found in the cytoplasm. Component of the eukaryotic translation initiation factor 3 (eIF-3) complex, which is involved in protein synthesis of a specialized repertoire of mRNAs and, together with other initiation factors, stimulates binding of mRNA and methionyl-tRNAi to the 40S ribosome. The eIF-3 complex specifically targets and initiates translation of a subset of mRNAs involved in cell proliferation. In Aspergillus terreus (strain NIH 2624 / FGSC A1156), this protein is Eukaryotic translation initiation factor 3 subunit E (int6).